The following is a 90-amino-acid chain: [Phe8]-phyllolitorin (90 aa).

Positions 1–30 (MSAVPFTRVLLISGFLAHLLLSTFVTLTVC) are cleaved as a signal peptide. A propeptide spanning residues 31–48 (KEVTEESDDLSKRNVLQR) is cleaved from the precursor. A Pyrrolidone carboxylic acid modification is found at Q49. The residue at position 57 (M57) is a Methionine amide. A propeptide spanning residues 61–90 (SLENTNRRSDEDMEISALFRGSPLKVKRSD) is cleaved from the precursor.

It belongs to the bombesin/neuromedin-B/ranatensin family. As to expression, expressed by the skin glands.

The protein resides in the secreted. The polypeptide is [Phe8]-phyllolitorin (Phyllomedusa sauvagei (Sauvage's leaf frog)).